The following is a 146-amino-acid chain: UPF0260 protein VF_1660 (146 aa).

The protein belongs to the UPF0260 family.

In Aliivibrio fischeri (strain ATCC 700601 / ES114) (Vibrio fischeri), this protein is UPF0260 protein VF_1660.